The sequence spans 169 residues: Putative phosphoesterase BLi01284/BL02661 (169 aa).

H34 functions as the Proton donor in the catalytic mechanism. Short sequence motifs (HXTX) lie at residues 34–37 (HLTL) and 115–118 (HVTV). H115 (proton acceptor) is an active-site residue.

Belongs to the 2H phosphoesterase superfamily. YjcG family.

This is Putative phosphoesterase BLi01284/BL02661 from Bacillus licheniformis (strain ATCC 14580 / DSM 13 / JCM 2505 / CCUG 7422 / NBRC 12200 / NCIMB 9375 / NCTC 10341 / NRRL NRS-1264 / Gibson 46).